Reading from the N-terminus, the 100-residue chain is Small ribosomal subunit protein uS14c (100 aa).

The protein belongs to the universal ribosomal protein uS14 family. Part of the 30S ribosomal subunit.

Its subcellular location is the plastid. It is found in the chloroplast. In terms of biological role, binds 16S rRNA, required for the assembly of 30S particles. The chain is Small ribosomal subunit protein uS14c from Oltmannsiellopsis viridis (Marine flagellate).